Reading from the N-terminus, the 930-residue chain is Polypeptide N-acetylgalactosaminyltransferase 5 (930 aa).

The Cytoplasmic segment spans residues 1–12 (MNKIRKFFRGSG). A helical; Signal-anchor for type II membrane protein transmembrane segment spans residues 13–35 (RVLAFIFAASVIWLLFDMAALRL). The Lumenal portion of the chain corresponds to 36–930 (SFSEINAGLL…KWKFEKYYEV (895 aa)). The disordered stretch occupies residues 190 to 209 (KQEAPQNYNVSSDTSKQASE). The span at 193 to 209 (APQNYNVSSDTSKQASE) shows a compositional bias: polar residues. N-linked (GlcNAc...) asparagine glycosylation is found at Asn198, Asn213, and Asn283. Ser285 is modified (phosphoserine). N-linked (GlcNAc...) asparagine glycans are attached at residues Asn287, Asn309, Asn355, and Asn387. The segment at 327-381 (DTKEVPNSKTQTVFPKLLGGSPHKQIPRNQSKTSSSPPALKKAVSQSKPTISGGL) is disordered. Positions 353–363 (PRNQSKTSSSP) are enriched in polar residues. Cystine bridges form between Cys476/Cys708, Cys699/Cys779, and Cys812/Cys825. Positions 485–594 (LPTTSIIMCF…VGWLEPLLER (110 aa)) are catalytic subdomain A. The substrate site is built by Asp526 and Arg555. N-linked (GlcNAc...) asparagine glycosylation occurs at Asn568. Position 578 (Asp578) interacts with Mn(2+). Residue Ser579 coordinates substrate. A Mn(2+)-binding site is contributed by His580. The catalytic subdomain B stretch occupies residues 654 to 716 (IIRCPVMAGG…PCSRVGHIFR (63 aa)). Residue Trp685 coordinates substrate. His713 provides a ligand contact to Mn(2+). 2 residues coordinate substrate: Arg716 and Tyr721. 3 N-linked (GlcNAc...) asparagine glycosylation sites follow: Asn766, Asn817, and Asn835. Residues 794–925 (KAPVVRASGV…MELQQKWKFE (132 aa)) form the Ricin B-type lectin domain. 2 disulfides stabilise this stretch: Cys848/Cys863 and Cys898/Cys913. N-linked (GlcNAc...) asparagine glycosylation occurs at Asn902.

The protein belongs to the glycosyltransferase 2 family. GalNAc-T subfamily. Interacts with EXT2. Does not interact with EXT1, EXTL1 or EXTL3. Requires Mn(2+) as cofactor. As to expression, expressed at low level. Not expressed before E7.5 during embryogenesis. Expressed in dental mesenchyme and tongue. Accumulates in a subset of mesenchymal cells at the ventral-most portions of the 12.5 dpc maxilla and mandible underlying the dental lamina.

It is found in the golgi apparatus membrane. The enzyme catalyses L-seryl-[protein] + UDP-N-acetyl-alpha-D-galactosamine = a 3-O-[N-acetyl-alpha-D-galactosaminyl]-L-seryl-[protein] + UDP + H(+). The catalysed reaction is L-threonyl-[protein] + UDP-N-acetyl-alpha-D-galactosamine = a 3-O-[N-acetyl-alpha-D-galactosaminyl]-L-threonyl-[protein] + UDP + H(+). It participates in protein modification; protein glycosylation. Its function is as follows. Catalyzes the initial reaction in O-linked oligosaccharide biosynthesis, the transfer of an N-acetyl-D-galactosamine residue to a serine or threonine residue on the protein receptor. Has activity toward EA2 peptide substrate, but has a weak activity toward Muc2 or Muc1b substrates. The sequence is that of Polypeptide N-acetylgalactosaminyltransferase 5 (Galnt5) from Mus musculus (Mouse).